Here is a 776-residue protein sequence, read N- to C-terminus: Semaphorin-4F (776 aa).

The first 39 residues, 1 to 39, serve as a signal peptide directing secretion; that stretch reads MLARAERPRPGPRPPPVFPFPPPLSLLLLLAILSAPVCG. Over 40-665 the chain is Extracellular; the sequence is RVPRSVPRTS…GPSNRAHTVV (626 aa). Positions 47-515 constitute a Sema domain; it reads RTSLPISEAD…SHTEVTQVNT (469 aa). The N-linked (GlcNAc...) asparagine glycan is linked to Asn-69. The cysteines at positions 117 and 127 are disulfide-linked. A glycan (N-linked (GlcNAc...) asparagine) is linked at Asn-138. 3 disulfides stabilise this stretch: Cys-145–Cys-154, Cys-278–Cys-389, and Cys-302–Cys-348. Residue Asn-514 is glycosylated (N-linked (GlcNAc...) asparagine). A PSI domain is found at 517-568; it reads NCGRLQSCSECILAQDPVCAWSFRLDACVAHAGEHRGMVQDIESADVSSLCP. Disulfide bonds link Cys-518/Cys-535, Cys-527/Cys-544, and Cys-592/Cys-633. Residues 585–640 form the Ig-like C2-type domain; that stretch reads VGHVVLPCSPSSAWASCVWHQPSGVTALTPRRDGLEVVVTPGAMGAYACECQEGGA. The chain crosses the membrane as a helical span at residues 666–686; that stretch reads GAGLVGFLLGVLAASLTLLLI. Topologically, residues 687–776 are cytoplasmic; that stretch reads GRRQQRRRQR…PLATCDETSI (90 aa). The segment at 702–741 is disordered; the sequence is DKVGLDLGAPPSGTTSYSQDPPSPSPEDERLPLALGKRGS. 2 positions are modified to phosphoserine: Ser-724 and Ser-726. Residues 774–776 carry the PDZ-binding motif; that stretch reads TSI.

Belongs to the semaphorin family. In terms of assembly, interacts (via PDZ-binding motif) with DLG4/SAP90 (via PDZ domain 2); this interaction may promote translocation of DLG4/SAP90 to the membrane. In terms of tissue distribution, expressed at low levels in the developing embryo. Expressed at high levels in the lung and adult central nervous system, including the dorsal root ganglia.

The protein localises to the cell membrane. The protein resides in the postsynaptic density. Its subcellular location is the perikaryon. It is found in the cell projection. It localises to the dendrite. Its function is as follows. Probable cell surface receptor that regulates oligodendroglial precursor cell migration. Might also regulate differentiation of oligodendroglial precursor cells. Has growth cone collapse activity against retinal ganglion-cell axons. In Rattus norvegicus (Rat), this protein is Semaphorin-4F (Sema4f).